Here is a 305-residue protein sequence, read N- to C-terminus: NDP-polyphosphate phosphotransferase 1 (305 aa).

It belongs to the polyphosphate kinase 2 (PPK2) family. Class I subfamily.

It carries out the reaction [phosphate](n) + ATP = [phosphate](n+1) + ADP. The catalysed reaction is [phosphate](n) + CTP = [phosphate](n+1) + CDP. The enzyme catalyses [phosphate](n) + GTP = [phosphate](n+1) + GDP. It catalyses the reaction [phosphate](n) + UTP = [phosphate](n+1) + UDP. With respect to regulation, shows little dependence on metals. Functionally, uses inorganic polyphosphate (polyP) as a donor to convert NDP to NTP. PolyP hydrolysis is slightly faster with GDP, but it can also use ADP, CDP and UDP. This Ruegeria pomeroyi (strain ATCC 700808 / DSM 15171 / DSS-3) (Silicibacter pomeroyi) protein is NDP-polyphosphate phosphotransferase 1.